Here is a 139-residue protein sequence, read N- to C-terminus: Large-conductance mechanosensitive channel (139 aa).

Helical transmembrane passes span 9–29 and 79–99; these read AFAVKGNVVDMAVGIIIGAAF and IQTVIDFVIVAFAIFMGVKAI.

It belongs to the MscL family. As to quaternary structure, homopentamer.

The protein localises to the cell inner membrane. In terms of biological role, channel that opens in response to stretch forces in the membrane lipid bilayer. May participate in the regulation of osmotic pressure changes within the cell. In Pseudomonas putida (strain GB-1), this protein is Large-conductance mechanosensitive channel.